Consider the following 104-residue polypeptide: Large ribosomal subunit protein uL23 (104 aa).

This sequence belongs to the universal ribosomal protein uL23 family. In terms of assembly, part of the 50S ribosomal subunit. Contacts protein L29, and trigger factor when it is bound to the ribosome.

Its function is as follows. One of the early assembly proteins it binds 23S rRNA. One of the proteins that surrounds the polypeptide exit tunnel on the outside of the ribosome. Forms the main docking site for trigger factor binding to the ribosome. This chain is Large ribosomal subunit protein uL23, found in Paraburkholderia phytofirmans (strain DSM 17436 / LMG 22146 / PsJN) (Burkholderia phytofirmans).